Reading from the N-terminus, the 79-residue chain is Major outer membrane lipoprotein Lpp 3 (79 aa).

Positions 1 to 21 (MNRTNKLILGAVVLGSALLAG) are cleaved as a signal peptide. Cysteine 22 carries N-palmitoyl cysteine lipidation. Residue cysteine 22 is the site of S-diacylglycerol cysteine attachment. Repeats lie at residues 25–35 (NAKIDQLSSDV) and 39–49 (SAKVDQLSNDV). A coiled-coil region spans residues 28 to 76 (IDQLSSDVQTLSAKVDQLSNDVNAMRSDVQAAKDDAARANQRLDNKVLR). Lysine 79 carries the N6-murein peptidoglycan lysine modification.

It belongs to the Lpp family. In terms of assembly, homotrimer.

It localises to the cell outer membrane. The protein resides in the secreted. The protein localises to the cell wall. Functionally, a highly abundant outer membrane lipoprotein that controls the distance between the inner and outer membranes. The only protein known to be covalently linked to the peptidoglycan network (PGN). Also non-covalently binds the PGN. The link between the cell outer membrane and PGN contributes to maintenance of the structural and functional integrity of the cell envelope, and maintains the correct distance between the PGN and the outer membrane. The sequence is that of Major outer membrane lipoprotein Lpp 3 from Salmonella paratyphi A (strain ATCC 9150 / SARB42).